An 86-amino-acid chain; its full sequence is Conotoxin Ec15a (86 aa).

The N-terminal stretch at 1–23 (MEKLTILILVATVLLAIQVLGQG) is a signal peptide. Positions 24-49 (EGEKPPKEWVQQYAAKRLWALMKGPR) are excised as a propeptide. Position 50 is a pyrrolidone carboxylic acid (glutamine 50).

Belongs to the conotoxin O2 superfamily. Contains 4 disulfide bonds. In terms of tissue distribution, expressed by the venom duct.

Its subcellular location is the secreted. This is Conotoxin Ec15a from Conus emaciatus (False virgin cone).